Consider the following 101-residue polypeptide: Urease subunit beta (101 aa).

The protein belongs to the urease beta subunit family. In terms of assembly, heterotrimer of UreA (gamma), UreB (beta) and UreC (alpha) subunits. Three heterotrimers associate to form the active enzyme.

Its subcellular location is the cytoplasm. It carries out the reaction urea + 2 H2O + H(+) = hydrogencarbonate + 2 NH4(+). The protein operates within nitrogen metabolism; urea degradation; CO(2) and NH(3) from urea (urease route): step 1/1. The chain is Urease subunit beta from Saccharophagus degradans (strain 2-40 / ATCC 43961 / DSM 17024).